Reading from the N-terminus, the 309-residue chain is HPr kinase/phosphorylase (309 aa).

Residues histidine 138 and lysine 159 contribute to the active site. 153–160 (GKSGIGKS) serves as a coordination point for ATP. Serine 160 contacts Mg(2+). Aspartate 177 (proton acceptor; for phosphorylation activity. Proton donor; for dephosphorylation activity) is an active-site residue. Residues 201-210 (IEVRGIGILD) form an important for the catalytic mechanism of both phosphorylation and dephosphorylation region. Glutamate 202 serves as a coordination point for Mg(2+). Residue arginine 243 is part of the active site. Residues 264-269 (PIKPAR) form an important for the catalytic mechanism of dephosphorylation region.

The protein belongs to the HPrK/P family. Homohexamer. The cofactor is Mg(2+).

The enzyme catalyses [HPr protein]-L-serine + ATP = [HPr protein]-O-phospho-L-serine + ADP + H(+). It catalyses the reaction [HPr protein]-O-phospho-L-serine + phosphate + H(+) = [HPr protein]-L-serine + diphosphate. Its function is as follows. Catalyzes the ATP- as well as the pyrophosphate-dependent phosphorylation of a specific serine residue in HPr, a phosphocarrier protein of the phosphoenolpyruvate-dependent sugar phosphotransferase system (PTS). HprK/P also catalyzes the pyrophosphate-producing, inorganic phosphate-dependent dephosphorylation (phosphorolysis) of seryl-phosphorylated HPr (P-Ser-HPr). The two antagonistic activities of HprK/P are regulated by several intracellular metabolites, which change their concentration in response to the absence or presence of rapidly metabolisable carbon sources (glucose, fructose, etc.) in the growth medium. Therefore, by controlling the phosphorylation state of HPr, HPrK/P is a sensor enzyme that plays a major role in the regulation of carbon metabolism and sugar transport: it mediates carbon catabolite repression (CCR), and regulates PTS-catalyzed carbohydrate uptake and inducer exclusion. This is HPr kinase/phosphorylase from Alkaliphilus metalliredigens (strain QYMF).